The chain runs to 234 residues: Cell fusion protein dni1 (234 aa).

An N-terminal signal peptide occupies residues 1 to 32; sequence MLFLHSVVQGTGTLCTLAAWILLALVMTGCQS. The Extracellular segment spans residues 33–96; sequence STTSKFQLFS…RSKFLINEVH (64 aa). A helical transmembrane segment spans residues 97–117; sequence PWMIVFSFCVCGVSFLMGVVS. The Cytoplasmic segment spans residues 118-132; it reads SLPLIGRLEFLRNIR. Residues 133-153 traverse the membrane as a helical segment; that stretch reads ISLSFFSFFSILVTALFAHVA. The Extracellular portion of the chain corresponds to 154-178; the sequence is VSSFVMAVGNGTQNRVTASLGKKAM. The helical transmembrane segment at 179-199 threads the bilayer; the sequence is IFLWCSMGLVTLTGITDSIIL. Residues 200–234 lie on the Cytoplasmic side of the membrane; the sequence is LVTSRTKKIRKTILEKSKVLTPSSSFSSKSSTTKY.

This sequence belongs to the SUR7 family.

The protein resides in the cell membrane. It localises to the cell tip. Cell membrane protein which plays a relevant role in coordinating membrane organization and cell wall remodeling during mating. The protein is Cell fusion protein dni1 (dni1) of Schizosaccharomyces pombe (strain 972 / ATCC 24843) (Fission yeast).